The following is a 251-amino-acid chain: DNA repair protein RecO (251 aa).

This sequence belongs to the RecO family.

Functionally, involved in DNA repair and RecF pathway recombination. In Acidiphilium cryptum (strain JF-5), this protein is DNA repair protein RecO.